The following is a 336-amino-acid chain: D-alanine--D-alanine ligase (336 aa).

Residues 124–330 (KMWFSALGVP…FTEYLIDVIG (207 aa)) enclose the ATP-grasp domain. ATP is bound at residue 154–209 (AFDNWGSVFVKAASQGSSVGCYKVDVKANIANVLKDAFSYAPYVVVEQTIHARELE). Mg(2+)-binding residues include Asp-284, Glu-297, and Asn-299.

Belongs to the D-alanine--D-alanine ligase family. It depends on Mg(2+) as a cofactor. Requires Mn(2+) as cofactor.

The protein resides in the cytoplasm. It catalyses the reaction 2 D-alanine + ATP = D-alanyl-D-alanine + ADP + phosphate + H(+). It participates in cell wall biogenesis; peptidoglycan biosynthesis. Functionally, cell wall formation. The protein is D-alanine--D-alanine ligase of Shewanella frigidimarina (strain NCIMB 400).